The chain runs to 367 residues: MIPVYEPSLDGNERKYLNDCIDSGWVSSRGKYIDRFETEFAEFLKVKHATTVSNGTVALHLAMSALGITQGDEVIVPTFTYVASVNTIVQCGALPVFAEIEGESLQVSVEDVKRKINKKTKAVMAVHIYGQACDIQSLRDLCDEHGLYLIEDCAEAIGTAVNGKKVGTFGDVSTFSFFGNKTITSGEGGMVVSNSDIIIDKCLRLKNQGVVAGKRYWHDLVAYNYRMTNLCAAIGVAQLERVDKIIKAKRDIAEIYRSELAGLPMQVHKESNGTFHSYWLTSIILDQEFEVHRDGLMTFLENNDIESRPFFYPAHTLPMYEHLAEKTAFPLSNSYSHRGINLPSWPGLCDDQVKEICNCIKNYFNCI.

Lys181 carries the post-translational modification N6-(pyridoxal phosphate)lysine.

The protein belongs to the DegT/DnrJ/EryC1 family. As to quaternary structure, homotetramer. Pyridoxal 5'-phosphate serves as cofactor.

The catalysed reaction is GDP-alpha-D-perosamine + 2-oxoglutarate = GDP-4-dehydro-alpha-D-rhamnose + L-glutamate. Its pathway is bacterial outer membrane biogenesis; LPS O-antigen biosynthesis. In terms of biological role, catalyzes the synthesis of GDP-perosamine from GDP-4-keto-6-deoxy-D-mannose and L-glutamate. Also shows weak activity with L-glutamine. The protein is GDP-perosamine synthase of Vibrio cholerae.